The sequence spans 83 residues: Defensin-1 (83 aa).

Residues 1 to 33 (MAGKGVGSRLSTLFLLVLLVITIGMMQVQVAEG) form the signal peptide. 4 disulfides stabilise this stretch: C36–C82, C47–C67, C53–C76, and C57–C78.

It belongs to the DEFL family.

It localises to the secreted. Functionally, plant defense peptide. Has antifungal activity against B.cinera, F.oxysporum, F.solani and H.annosum with IC(50) values of 0.4 ug/ml, 2.9 ug/ml, 0.9 ug/ml and 1.4 ug/ml, respectively. Has modest antifungal activity against C.albicans and T.reesei. Causes thickening of F.oxysporum hyphae and an increase in their branching. Lacks antibacterial activity against the Gram-negative bacteria E.coli and E.carotovora. This chain is Defensin-1, found in Pinus sylvestris (Scotch pine).